Here is a 162-residue protein sequence, read N- to C-terminus: Phosphopantetheine adenylyltransferase (162 aa).

Ser-9 serves as a coordination point for substrate. Residues 9–10 and His-17 contribute to the ATP site; that span reads SF. The substrate site is built by Lys-41, Thr-73, and Arg-87. ATP contacts are provided by residues 88–90, Glu-98, and 123–129; these read GLR and YSFISSS.

It belongs to the bacterial CoaD family. As to quaternary structure, homohexamer. Mg(2+) is required as a cofactor.

It localises to the cytoplasm. The catalysed reaction is (R)-4'-phosphopantetheine + ATP + H(+) = 3'-dephospho-CoA + diphosphate. Its pathway is cofactor biosynthesis; coenzyme A biosynthesis; CoA from (R)-pantothenate: step 4/5. Reversibly transfers an adenylyl group from ATP to 4'-phosphopantetheine, yielding dephospho-CoA (dPCoA) and pyrophosphate. The chain is Phosphopantetheine adenylyltransferase from Carboxydothermus hydrogenoformans (strain ATCC BAA-161 / DSM 6008 / Z-2901).